The chain runs to 212 residues: 3-demethoxyubiquinol 3-hydroxylase (212 aa).

Fe cation is bound by residues glutamate 61, glutamate 91, histidine 94, glutamate 143, glutamate 175, and histidine 178.

The protein belongs to the COQ7 family. Requires Fe cation as cofactor.

It localises to the cell membrane. It carries out the reaction a 5-methoxy-2-methyl-3-(all-trans-polyprenyl)benzene-1,4-diol + AH2 + O2 = a 3-demethylubiquinol + A + H2O. It participates in cofactor biosynthesis; ubiquinone biosynthesis. Its function is as follows. Catalyzes the hydroxylation of 2-nonaprenyl-3-methyl-6-methoxy-1,4-benzoquinol during ubiquinone biosynthesis. The chain is 3-demethoxyubiquinol 3-hydroxylase from Paraburkholderia phytofirmans (strain DSM 17436 / LMG 22146 / PsJN) (Burkholderia phytofirmans).